A 160-amino-acid polypeptide reads, in one-letter code: Complexin-4 (160 aa).

Residues 14 to 44 form a disordered region; that stretch reads KNLGFGGGSEEKKEEGGTSDPAAAKGMTREE. Cys157 is subject to Cysteine methyl ester. Cys157 carries the S-farnesyl cysteine lipid modification. A propeptide spans 158–160 (removed in mature form); the sequence is SVM.

This sequence belongs to the complexin/synaphin family. As to quaternary structure, weakly binds to the SNARE core complex containing SNAP25, VAMP2 and STX1A. Post-translationally, farnesylation mediates presynaptic targeting and is important for function in neurotransmitter release. As to expression, present specifically in the retina (at protein level). Expressed in the outer nuclear layer of the retina (at protein level). Strongly expressed at rod photoreceptor ribbon synapses (at protein level). Not expressed at conventional amacrine cell synapses, nor at cone photoreceptor ribbon synapses (at protein level). Weakly expressed at cone photoreceptor synaptic terminals (at protein level). Not expressed in the brain (at protein level).

Its subcellular location is the synapse. The protein resides in the cell membrane. Functionally, complexin that regulates SNARE protein complex-mediated synaptic vesicle fusion. Required for the maintenance of synaptic ultrastructure in the adult retina. Positively regulates synaptic transmission through synaptic vesicle availability and exocytosis of neurotransmitters at photoreceptor ribbon synapses in the retina. Suppresses tonic photoreceptor activity and baseline 'noise' by suppression of Ca(2+) vesicle tonic release and the facilitation of evoked synchronous and asynchronous Ca(2+) vesicle release. The protein is Complexin-4 (Cplx4) of Mus musculus (Mouse).